A 217-amino-acid polypeptide reads, in one-letter code: Small ribosomal subunit protein uS3 (217 aa).

The KH type-2 domain maps to 38 to 106 (IRKFIDNELK…KVHINVIEIK (69 aa)).

It belongs to the universal ribosomal protein uS3 family. In terms of assembly, part of the 30S ribosomal subunit. Forms a tight complex with proteins S10 and S14.

Binds the lower part of the 30S subunit head. Binds mRNA in the 70S ribosome, positioning it for translation. The sequence is that of Small ribosomal subunit protein uS3 from Staphylococcus haemolyticus (strain JCSC1435).